Consider the following 347-residue polypeptide: GMP reductase (347 aa).

108–131 (ADFEKTVQILALNPALNFVCIDVA) provides a ligand contact to NADP(+). K(+) is bound by residues G181 and G183. C186 (thioimidate intermediate) is an active-site residue. Residue 216-239 (IVSDGGCTMPGDVAKAFGGGADFV) participates in NADP(+) binding.

Belongs to the IMPDH/GMPR family. GuaC type 1 subfamily. Homotetramer.

The catalysed reaction is IMP + NH4(+) + NADP(+) = GMP + NADPH + 2 H(+). Catalyzes the irreversible NADPH-dependent deamination of GMP to IMP. It functions in the conversion of nucleobase, nucleoside and nucleotide derivatives of G to A nucleotides, and in maintaining the intracellular balance of A and G nucleotides. In Salmonella choleraesuis (strain SC-B67), this protein is GMP reductase.